The following is a 432-amino-acid chain: Polyadenylate-binding protein RBP47C (432 aa).

Positions 1–55 (MADVKIQSESESSDSHPVVDNQPPPPPPPPQQPAKEEENQPKTSPTPPPHWMRYP) are disordered. Over residues 22 to 32 (QPPPPPPPPQQ) the composition is skewed to pro residues. 2 consecutive RRM domains span residues 101-183 (KTIW…WASF) and 197-276 (LSIF…PATP). A disordered region spans residues 271-293 (IGPATPRKTNGYQQQGGYMPNGT). Residues 277-286 (RKTNGYQQQG) show a composition bias toward polar residues. The 73-residue stretch at 304–376 (TTIFVGGLDS…QTVRLSWGRN (73 aa)) folds into the RRM 3 domain.

The protein belongs to the polyadenylate-binding RBP47 family. Interacts with the poly(A) tail of mRNA in nucleus. Expressed in leaves, stems, flowers, and seedlings.

The protein localises to the nucleus. The protein resides in the cytoplasmic granule. Functionally, heterogeneous nuclear ribonucleoprotein (hnRNP)-protein binding the poly(A) tail of mRNA and probably involved in some steps of pre-mRNA maturation. In Arabidopsis thaliana (Mouse-ear cress), this protein is Polyadenylate-binding protein RBP47C (RBP47C).